The following is a 222-amino-acid chain: Riboflavin kinase (222 aa).

Residues 1 to 92 (MVLAEDLECL…CRLFAHEGGH (92 aa)) are H-T-H motif-like. The interval 93–222 (YTLPGIVISG…DRVNVEVAYD (130 aa)) is riboflavin kinase. 102–107 (GLGEGR) is a CDP binding site. Mg(2+) contacts are provided by Thr-131 and Asn-133. FMN-binding residues include Ser-188 and Glu-196. 201–204 (VGLR) serves as a coordination point for CDP.

Belongs to the archaeal riboflavin kinase family. The cofactor is Mg(2+).

It carries out the reaction riboflavin + CTP = CDP + FMN + H(+). Its pathway is cofactor biosynthesis; FMN biosynthesis; FMN from riboflavin (CTP route): step 1/1. Its function is as follows. Catalyzes the CTP-dependent phosphorylation of riboflavin (vitamin B2) to form flavin mononucleotide (FMN). The protein is Riboflavin kinase (ribK) of Methanoregula boonei (strain DSM 21154 / JCM 14090 / 6A8).